Here is a 314-residue protein sequence, read N- to C-terminus: Olfactory receptor 14K1 (314 aa).

At 1–23 (MTNQTQMMEFLLVRFTENWVLLR) the chain is on the extracellular side. N3 carries an N-linked (GlcNAc...) asparagine glycan. The chain crosses the membrane as a helical span at residues 24-44 (LHALLFSLIYLTAVLMNLVII). The Cytoplasmic segment spans residues 45–52 (LLMILDHR). A helical membrane pass occupies residues 53–73 (LHMAMYFFLRHLSFLDLCLIS). Residues 74–97 (ATVPKSILNSVASTDSISFLGCVL) lie on the Extracellular side of the membrane. Cysteines 95 and 187 form a disulfide. A helical membrane pass occupies residues 98-118 (QLFLVVLLAGSEIGILTAMSY). Topologically, residues 119 to 131 (DRYAAICCPLHCE) are cytoplasmic. The helical transmembrane segment at 132-152 (AVMSRGLCVQLMALSWLNRGA) threads the bilayer. At 153–194 (LGLLYTAGTFSLNFYGSDELHQFFCDVPALLKLTCSKEHAII) the chain is on the extracellular side. A helical membrane pass occupies residues 195–215 (SVSVAIGVCYAFSCLVCIVVS). Residues 216-235 (YVYIFSAVLRISQRQRQSKA) lie on the Cytoplasmic side of the membrane. Residues 236 to 256 (FSNCVPHLIVVTVFLVTGAVA) traverse the membrane as a helical segment. At 257 to 269 (YLKPGSDAPSILD) the chain is on the extracellular side. A helical membrane pass occupies residues 270 to 290 (LLVSVFYSVAPPTLNPVIYCL). At 291 to 314 (KNKDIKSALSKVLWNVRSSGVMKR) the chain is on the cytoplasmic side.

Belongs to the G-protein coupled receptor 1 family.

Its subcellular location is the cell membrane. In terms of biological role, odorant receptor. The polypeptide is Olfactory receptor 14K1 (OR14K1) (Homo sapiens (Human)).